The sequence spans 345 residues: Phosphoribosylformylglycinamidine cyclo-ligase (345 aa).

The protein belongs to the AIR synthase family.

The protein localises to the cytoplasm. It catalyses the reaction 2-formamido-N(1)-(5-O-phospho-beta-D-ribosyl)acetamidine + ATP = 5-amino-1-(5-phospho-beta-D-ribosyl)imidazole + ADP + phosphate + H(+). It functions in the pathway purine metabolism; IMP biosynthesis via de novo pathway; 5-amino-1-(5-phospho-D-ribosyl)imidazole from N(2)-formyl-N(1)-(5-phospho-D-ribosyl)glycinamide: step 2/2. This chain is Phosphoribosylformylglycinamidine cyclo-ligase, found in Escherichia coli O139:H28 (strain E24377A / ETEC).